The primary structure comprises 759 residues: Protein YdeP (759 aa).

2 residues coordinate [4Fe-4S] cluster: Cys-49 and Cys-52.

Belongs to the prokaryotic molybdopterin-containing oxidoreductase family. [4Fe-4S] cluster is required as a cofactor. Requires Mo-bis(molybdopterin guanine dinucleotide) as cofactor.

Functionally, probably involved in acid resistance. In Shigella flexneri, this protein is Protein YdeP (ydeP).